We begin with the raw amino-acid sequence, 222 residues long: Adenylate kinase (222 aa).

ATP is bound at residue 10-15; the sequence is GAGKGT. The tract at residues 30–59 is NMP; the sequence is STGDMLRAAVKAGTPLGIEAKKVMDAGGLV. Residues threonine 31, arginine 36, 57-59, 85-88, and glutamine 92 contribute to the AMP site; these read GLV and GFPR. An LID region spans residues 122 to 159; it reads GRRVHVASGRTYHVKYNPPKNEGQDDETGDPLIQRDDD. ATP is bound by residues arginine 123 and 132–133; that span reads TY. A disordered region spans residues 135-162; it reads VKYNPPKNEGQDDETGDPLIQRDDDKEE. AMP-binding residues include arginine 156 and arginine 167. An ATP-binding site is contributed by glycine 207.

Belongs to the adenylate kinase family. In terms of assembly, monomer.

It localises to the cytoplasm. It catalyses the reaction AMP + ATP = 2 ADP. It functions in the pathway purine metabolism; AMP biosynthesis via salvage pathway; AMP from ADP: step 1/1. Functionally, catalyzes the reversible transfer of the terminal phosphate group between ATP and AMP. Plays an important role in cellular energy homeostasis and in adenine nucleotide metabolism. The sequence is that of Adenylate kinase from Ralstonia nicotianae (strain ATCC BAA-1114 / GMI1000) (Ralstonia solanacearum).